The following is a 163-amino-acid chain: Shikimate kinase (163 aa).

10–15 serves as a coordination point for ATP; the sequence is GVGKSS. Serine 14 contributes to the Mg(2+) binding site. Positions 28, 52, and 75 each coordinate substrate. Position 116 (arginine 116) interacts with ATP. Arginine 134 is a substrate binding site. Residue arginine 151 coordinates ATP.

This sequence belongs to the shikimate kinase family. Monomer. Mg(2+) serves as cofactor.

Its subcellular location is the cytoplasm. It catalyses the reaction shikimate + ATP = 3-phosphoshikimate + ADP + H(+). Its pathway is metabolic intermediate biosynthesis; chorismate biosynthesis; chorismate from D-erythrose 4-phosphate and phosphoenolpyruvate: step 5/7. In terms of biological role, catalyzes the specific phosphorylation of the 3-hydroxyl group of shikimic acid using ATP as a cosubstrate. This chain is Shikimate kinase, found in Streptococcus thermophilus (strain ATCC BAA-491 / LMD-9).